The chain runs to 336 residues: Gibberellin 2-beta-dioxygenase 7 (336 aa).

A Fe2OG dioxygenase domain is found at 191 to 291; sequence LENSFLRLNK…RMSIAFFVCP (101 aa). Histidine 216, aspartate 218, and histidine 272 together coordinate Fe cation. The active site involves arginine 282. Arginine 282 lines the 2-oxoglutarate pocket.

Belongs to the iron/ascorbate-dependent oxidoreductase family. GA2OX subfamily. Fe(2+) serves as cofactor.

It catalyses the reaction gibberellin A1 + 2-oxoglutarate + O2 = gibberellin A8 + succinate + CO2. The protein operates within plant hormone biosynthesis; gibberellin biosynthesis. Functionally, catalyzes the 2-beta-hydroxylation of gibberellins (GA) precursors, rendering them unable to be converted to active GAs. Hydroxylates the C20-GA GA12 and GA53, but is not active on C19-GAs, like GA1, GA4, GA9 and GA20. This Arabidopsis thaliana (Mouse-ear cress) protein is Gibberellin 2-beta-dioxygenase 7 (GA2OX7).